The primary structure comprises 500 residues: MTNIAILGTASDVGKSIVATALCRIFSNAGVDVAPYKAQNMSNNSGVTPDGFEMGRAQIVQAQAARVAPHADMNPVLLKPNTDTGAQVVLQGKVCADKSAREYFGDTQRWAEAAFESLDRLMVRHELLVIEGAGSCAEMNLYQRDFVNFKTARRAGAAVILVADIDRGGVFAQVVGTLAVIPPEDRALVKGVIINRFRGDKSLFEGGVKMLESMTGVPVLGVIPYFRGFTIDAEDAVPLSSVVDPKQEPSGDKIGVAAIYFPHISNFTDLAPLERDPSVELHYLHRPKSLDGYKALILPGSKNVRGDLAWLETMGWRDEIEKFRKRGGIIVGLCGGYQMLGASIADPYGVEGAPGASAGLAMLPVETVLEREKALCNSVGKIAGTPFFVSGYEIHMGRTALEPGASPLLEVTERNGVATDDFDGAKSADGQVTGTYFHGFFDRPEVRTWFLRLLDGGYESPRGASVADPFELLAKHFSENLDLEKLFAIAGLSVKGEKES.

Residues 253-446 (KIGVAAIYFP…FHGFFDRPEV (194 aa)) form the GATase cobBQ-type domain. Catalysis depends on Cys334, which acts as the Nucleophile. Residue His438 is part of the active site.

Belongs to the CobB/CobQ family. CobQ subfamily.

It functions in the pathway cofactor biosynthesis; adenosylcobalamin biosynthesis. Its function is as follows. Catalyzes amidations at positions B, D, E, and G on adenosylcobyrinic A,C-diamide. NH(2) groups are provided by glutamine, and one molecule of ATP is hydrogenolyzed for each amidation. The protein is Cobyric acid synthase of Chlorobaculum tepidum (strain ATCC 49652 / DSM 12025 / NBRC 103806 / TLS) (Chlorobium tepidum).